A 930-amino-acid polypeptide reads, in one-letter code: Kinesin-like protein KIN-7J (930 aa).

The 265-residue stretch at Lys9–Arg273 folds into the Kinesin motor domain. Gly95 to Thr102 contributes to the ATP binding site. Disordered regions lie at residues Leu449 to Asp569 and Met655 to Asp686. The segment covering Ser459–Ser468 has biased composition (low complexity). Composition is skewed to basic and acidic residues over residues Glu473 to Met482 and Ala533 to Asn558. The span at Thr666–Thr681 shows a compositional bias: low complexity. A Glycyl lysine isopeptide (Lys-Gly) (interchain with G-Cter in ubiquitin) cross-link involves residue Lys805.

This sequence belongs to the TRAFAC class myosin-kinesin ATPase superfamily. Kinesin family. KIN-7 subfamily.

This Arabidopsis thaliana (Mouse-ear cress) protein is Kinesin-like protein KIN-7J.